We begin with the raw amino-acid sequence, 297 residues long: Calponin-1 (297 aa).

The 104-residue stretch at 28–131 (HQREQELREW…STLLALASMA (104 aa)) folds into the Calponin-homology (CH) domain. Calponin-like repeat units lie at residues 164–189 (IGLQ…RHLY), 204–229 (ISLQ…RQIF), and 243–268 (VSLQ…RQVY). Thr-170 bears the Phosphothreonine; by ROCK2 mark. Ser-175 is subject to Phosphoserine; by ROCK2. Phosphothreonine; by ROCK2 occurs at positions 180 and 184. A Phosphothreonine; by ROCK2 modification is found at Thr-259.

The protein belongs to the calponin family.

Thin filament-associated protein that is implicated in the regulation and modulation of smooth muscle contraction. It is capable of binding to actin, calmodulin and tropomyosin. The interaction of calponin with actin inhibits the actomyosin Mg-ATPase activity. This chain is Calponin-1 (CNN1), found in Bos taurus (Bovine).